We begin with the raw amino-acid sequence, 187 residues long: Potassium-transporting ATPase KdpC subunit (187 aa).

The helical transmembrane segment at 10–30 (LVAATMLICVAGYSAAVWAVG) threads the bilayer.

The protein belongs to the KdpC family. In terms of assembly, the system is composed of three essential subunits: KdpA, KdpB and KdpC.

It is found in the cell inner membrane. Its function is as follows. Part of the high-affinity ATP-driven potassium transport (or Kdp) system, which catalyzes the hydrolysis of ATP coupled with the electrogenic transport of potassium into the cytoplasm. This subunit acts as a catalytic chaperone that increases the ATP-binding affinity of the ATP-hydrolyzing subunit KdpB by the formation of a transient KdpB/KdpC/ATP ternary complex. In Parvibaculum lavamentivorans (strain DS-1 / DSM 13023 / NCIMB 13966), this protein is Potassium-transporting ATPase KdpC subunit.